We begin with the raw amino-acid sequence, 431 residues long: Adenylosuccinate synthetase (431 aa).

GTP-binding positions include 13-19 (GDEGKGK) and 41-43 (GHT). D14 (proton acceptor) is an active-site residue. The Mg(2+) site is built by D14 and G41. Residues 14–17 (DEGK), 39–42 (NAGH), T130, R144, Q225, T240, and R304 each bind IMP. The active-site Proton donor is H42. Position 300 to 306 (300 to 306 (SVTGRPR)) interacts with substrate. GTP contacts are provided by residues R306, 332-334 (KLD), and 414-416 (STG).

The protein belongs to the adenylosuccinate synthetase family. As to quaternary structure, homodimer. Mg(2+) is required as a cofactor.

It localises to the cytoplasm. It catalyses the reaction IMP + L-aspartate + GTP = N(6)-(1,2-dicarboxyethyl)-AMP + GDP + phosphate + 2 H(+). The protein operates within purine metabolism; AMP biosynthesis via de novo pathway; AMP from IMP: step 1/2. Its function is as follows. Plays an important role in the de novo pathway of purine nucleotide biosynthesis. Catalyzes the first committed step in the biosynthesis of AMP from IMP. In Bordetella avium (strain 197N), this protein is Adenylosuccinate synthetase.